The following is a 207-amino-acid chain: Large ribosomal subunit protein bL20 (207 aa).

The disordered stretch occupies residues 117 to 161 (QETQPQPEEKTSLQPEKVLSTELSEEKSDDTLETKPQTTQVKAKK). Positions 140 to 149 (SEEKSDDTLE) are enriched in basic and acidic residues.

It belongs to the bacterial ribosomal protein bL20 family.

Its function is as follows. Binds directly to 23S ribosomal RNA and is necessary for the in vitro assembly process of the 50S ribosomal subunit. It is not involved in the protein synthesizing functions of that subunit. The protein is Large ribosomal subunit protein bL20 of Onion yellows phytoplasma (strain OY-M).